The chain runs to 976 residues: 5'-3' exoribonuclease 2 homolog (976 aa).

The CCHC-type zinc-finger motif lies at 264-281 (RACELCGQYGHELKECRG). Residues 411 to 420 (DEERFKENQK) are compositionally biased toward basic and acidic residues. Residues 411–442 (DEERFKENQKNKKARMQQYGRGRGGRGRGRGQ) form a disordered region. The tract at residues 535 to 788 (DIRLYESGWK…GICVLYEDPE (254 aa)) is interaction with paxt-1. The segment at 815–976 (WNERRDGRFN…GGYQGNSSWR (162 aa)) is disordered. Residues 856–866 (DRQGGNDNYRG) show a composition bias toward low complexity.

Belongs to the 5'-3' exonuclease family. XRN2/RAT1 subfamily. In terms of assembly, interacts with paxt-1 (via N-terminus); the interaction is direct and results in stabilization of xrn-2 in the complex.

The protein localises to the nucleus. Its function is as follows. Possesses 5'-&gt;3' exoribonuclease activity. Plays a role in maintenance of steady-state concentration and turnover of microRNAs (miRNA) by degradation of mature miRNA. Degradation role is enhanced when in complex with paxt-1. Partially redundant to xrn-1 in miRNA guide strand degradation. Implicated in differential regulation of mRNAs such as let-7 by controlling the accumulation of mature miRNA. Positively regulates molting of the pharyngeal cuticle. The polypeptide is 5'-3' exoribonuclease 2 homolog (Caenorhabditis briggsae).